The sequence spans 290 residues: MTTSGGLTGPGAFGRLPQPFHQPGITSFVEFLALQAPDLLPGRLQMPAGGQPPEVPHGTTIVAVAYQGGVVMAGDRRATMGNVIAQRDIEKVFQTDEHSCVGIAGSAGIALEVVRLFQVELEHYEKLQGTTLSLEGKANRLAMMIRANLPMALQGLAVVPLFAGYDLFADDPQRAGRIFSFDVTGGRYEEHSFHAVGSGSTFARGALKKLFRDDFDEPHAVRTCIEALYDAADDDSATGGPDLTRRIYPVVAVVDANGFRRLADDTVGGVVEQVIAARMANPGGPVAVLP.

A propeptide spans 1–58 (removed in mature form; by autocatalysis); it reads MTTSGGLTGPGAFGRLPQPFHQPGITSFVEFLALQAPDLLPGRLQMPAGGQPPEVPHG. The active-site Nucleophile is Thr-59.

The protein belongs to the peptidase T1B family. The 20S proteasome core is composed of 14 alpha and 14 beta subunits that assemble into four stacked heptameric rings, resulting in a barrel-shaped structure. The two inner rings, each composed of seven catalytic beta subunits, are sandwiched by two outer rings, each composed of seven alpha subunits. The catalytic chamber with the active sites is on the inside of the barrel. Has a gated structure, the ends of the cylinder being occluded by the N-termini of the alpha-subunits. Is capped by the proteasome-associated ATPase, ARC.

It is found in the cytoplasm. It carries out the reaction Cleavage of peptide bonds with very broad specificity.. It functions in the pathway protein degradation; proteasomal Pup-dependent pathway. With respect to regulation, the formation of the proteasomal ATPase ARC-20S proteasome complex, likely via the docking of the C-termini of ARC into the intersubunit pockets in the alpha-rings, may trigger opening of the gate for substrate entry. Interconversion between the open-gate and close-gate conformations leads to a dynamic regulation of the 20S proteasome proteolysis activity. Component of the proteasome core, a large protease complex with broad specificity involved in protein degradation. In Acidothermus cellulolyticus (strain ATCC 43068 / DSM 8971 / 11B), this protein is Proteasome subunit beta.